We begin with the raw amino-acid sequence, 57 residues long: Preprotein translocase subunit SecG (57 aa).

At 1–33 the chain is on the cytoplasmic side; sequence MARRRRYEGLNPFVAAGLIKFSEEGELERIKLT. The helical transmembrane segment at 34 to 55 threads the bilayer; the sequence is PKSAVVISVALIAAILVLNLIH. At 56–57 the chain is on the extracellular side; it reads PL.

The protein belongs to the SEC61-beta family. In terms of assembly, component of the protein translocase complex. Heterotrimer consisting of alpha (SecY), beta (SecG) and gamma (SecE) subunits. Can form oligomers of the heterotrimer.

Its subcellular location is the cell membrane. Functionally, involved in protein export. The function of the beta subunit is unknown, but it may be involved in stabilization of the trimeric complex. The protein is Preprotein translocase subunit SecG of Pyrobaculum neutrophilum (strain DSM 2338 / JCM 9278 / NBRC 100436 / V24Sta) (Thermoproteus neutrophilus).